The following is a 70-amino-acid chain: DNA-directed RNA polymerase subunit omega (70 aa).

It belongs to the RNA polymerase subunit omega family. The RNAP catalytic core consists of 2 alpha, 1 beta, 1 beta' and 1 omega subunit. When a sigma factor is associated with the core the holoenzyme is formed, which can initiate transcription.

The catalysed reaction is RNA(n) + a ribonucleoside 5'-triphosphate = RNA(n+1) + diphosphate. Its function is as follows. Promotes RNA polymerase assembly. Latches the N- and C-terminal regions of the beta' subunit thereby facilitating its interaction with the beta and alpha subunits. The sequence is that of DNA-directed RNA polymerase subunit omega from Bacillus cytotoxicus (strain DSM 22905 / CIP 110041 / 391-98 / NVH 391-98).